Reading from the N-terminus, the 589-residue chain is Aspartate--tRNA ligase (589 aa).

Residue E174 participates in L-aspartate binding. Residues 198-201 form an aspartate region; it reads QLFK. R220 provides a ligand contact to L-aspartate. Residues 220–222 and Q229 contribute to the ATP site; that span reads RDE. H448 lines the L-aspartate pocket. Residue E483 participates in ATP binding. R490 is an L-aspartate binding site. 535–538 is an ATP binding site; it reads GIDR.

The protein belongs to the class-II aminoacyl-tRNA synthetase family. Type 1 subfamily. In terms of assembly, homodimer.

It localises to the cytoplasm. The enzyme catalyses tRNA(Asp) + L-aspartate + ATP = L-aspartyl-tRNA(Asp) + AMP + diphosphate. Functionally, catalyzes the attachment of L-aspartate to tRNA(Asp) in a two-step reaction: L-aspartate is first activated by ATP to form Asp-AMP and then transferred to the acceptor end of tRNA(Asp). The chain is Aspartate--tRNA ligase from Xylella fastidiosa (strain 9a5c).